The sequence spans 105 residues: Late embryogenesis abundant protein Lea5-A (105 aa).

This sequence belongs to the LEA type 3 family.

This Gossypium hirsutum (Upland cotton) protein is Late embryogenesis abundant protein Lea5-A (LEA5-A).